The chain runs to 131 residues: POU domain, class 3, transcription factor 3 (131 aa).

A POU-specific domain is found at 1 to 60 (FTQRRMKLGFTQADVGLALGTLYGNVFSQTTICRFEALQLSFKNMCKLKPLLNKWLEEAD). The segment at residues 78–131 (KRKKRTSIEVSVKGALESHFLKCPKPSAQEITNLADSLQLEKEVVRVWFCNNLQ) is a DNA-binding region (homeobox).

The protein belongs to the POU transcription factor family. Class-3 subfamily. In terms of assembly, homodimer. In terms of tissue distribution, brain.

It is found in the nucleus. Functionally, transcription factor that acts synergistically with SOX11 and SOX4. Plays a role in neuronal development. Is implicated in an enhancer activity at the embryonic met-mesencephalic junction; the enhancer element contains the octamer motif (5'-ATTTGCAT-3'). The sequence is that of POU domain, class 3, transcription factor 3 (POU3F3) from Sus scrofa (Pig).